Here is a 404-residue protein sequence, read N- to C-terminus: Methionine aminopeptidase 1D, mitochondrial (404 aa).

A mitochondrion-targeting transit peptide spans 1-58; it reads MNKILKNIINKSSINNVFKTSFNGGISSSSSSSSSYLNNNNNIIKSYNVQQKQQQRYY. Residues 86 to 109 are disordered; that stretch reads VRSQRLTKKTASPLEGMNRKERRK. His232 contributes to the substrate binding site. The a divalent metal cation site is built by Asp249, Asp260, and His323. His330 provides a ligand contact to substrate. 2 residues coordinate a divalent metal cation: Glu355 and Glu389.

It belongs to the peptidase M24A family. Methionine aminopeptidase type 1 subfamily. Co(2+) serves as cofactor. Requires Zn(2+) as cofactor. It depends on Mn(2+) as a cofactor. The cofactor is Fe(2+).

It localises to the mitochondrion. It carries out the reaction Release of N-terminal amino acids, preferentially methionine, from peptides and arylamides.. Functionally, removes the N-terminal methionine from nascent proteins. The N-terminal methionine is often cleaved when the second residue in the primary sequence is small and uncharged (Met-Ala-, Cys, Gly, Pro, Ser, Thr, or Val). In Dictyostelium discoideum (Social amoeba), this protein is Methionine aminopeptidase 1D, mitochondrial (metap1d).